Consider the following 87-residue polypeptide: DNA-directed RNA polymerase subunit omega (87 aa).

The protein belongs to the RNA polymerase subunit omega family. The RNAP catalytic core consists of 2 alpha, 1 beta, 1 beta' and 1 omega subunit. When a sigma factor is associated with the core the holoenzyme is formed, which can initiate transcription.

The enzyme catalyses RNA(n) + a ribonucleoside 5'-triphosphate = RNA(n+1) + diphosphate. Promotes RNA polymerase assembly. Latches the N- and C-terminal regions of the beta' subunit thereby facilitating its interaction with the beta and alpha subunits. In Pseudomonas entomophila (strain L48), this protein is DNA-directed RNA polymerase subunit omega.